Reading from the N-terminus, the 523-residue chain is Effector protein hopAB1 (523 aa).

3 disordered regions span residues Met1–Gln94, Val165–Asp223, and Arg299–Arg320. A compositionally biased stretch (basic and acidic residues) spans Thr18 to Ser31. The segment covering Ser181 to Ser194 has biased composition (low complexity).

This sequence belongs to the HopAB family.

It is found in the secreted. Effector protein that plays different roles depending on the species and plant cultivars that interact with the pathogen. Acts as a virulence determinant by enhancing the development of disease symptoms and bacterial growth. Acts as an avirulence factor by eliciting hypersensitive response (HR) and plant resistance. This is Effector protein hopAB1 (hopAB1) from Pseudomonas savastanoi pv. glycinea (Pseudomonas syringae pv. glycinea).